Here is a 158-residue protein sequence, read N- to C-terminus: Xanthine-guanine phosphoribosyltransferase (158 aa).

Residues 38–39 and 90–98 each bind 5-phospho-alpha-D-ribose 1-diphosphate; these read RG and DDLVDTGGT. Asp-91 serves as a coordination point for Mg(2+). Residues Asp-94 and Ile-137 each coordinate guanine. Xanthine contacts are provided by Asp-94 and Ile-137. GMP-binding positions include 94 to 98 and 136 to 137; these read DTGGT and WI.

This sequence belongs to the purine/pyrimidine phosphoribosyltransferase family. XGPT subfamily. Homotetramer. It depends on Mg(2+) as a cofactor.

It localises to the cell inner membrane. The enzyme catalyses GMP + diphosphate = guanine + 5-phospho-alpha-D-ribose 1-diphosphate. The catalysed reaction is XMP + diphosphate = xanthine + 5-phospho-alpha-D-ribose 1-diphosphate. It carries out the reaction IMP + diphosphate = hypoxanthine + 5-phospho-alpha-D-ribose 1-diphosphate. The protein operates within purine metabolism; GMP biosynthesis via salvage pathway; GMP from guanine: step 1/1. It functions in the pathway purine metabolism; XMP biosynthesis via salvage pathway; XMP from xanthine: step 1/1. In terms of biological role, purine salvage pathway enzyme that catalyzes the transfer of the ribosyl-5-phosphate group from 5-phospho-alpha-D-ribose 1-diphosphate (PRPP) to the N9 position of the 6-oxopurines guanine and xanthine to form the corresponding ribonucleotides GMP (guanosine 5'-monophosphate) and XMP (xanthosine 5'-monophosphate), with the release of PPi. To a lesser extent, also acts on hypoxanthine. This chain is Xanthine-guanine phosphoribosyltransferase, found in Buchnera aphidicola subsp. Acyrthosiphon pisum (strain APS) (Acyrthosiphon pisum symbiotic bacterium).